A 148-amino-acid polypeptide reads, in one-letter code: Snaclec alboaggregin-D subunit beta (148 aa).

The N-terminal stretch at 1–23 (MGRFISVSFGLLVVFLSLSGAGA) is a signal peptide. Cysteine 27 and cysteine 38 are disulfide-bonded. Positions 34 to 145 (YDLYCYKVFK…CNSTYSFVCK (112 aa)) constitute a C-type lectin domain. An N-linked (GlcNAc...) asparagine glycan is attached at asparagine 47. Disulfide bonds link cysteine 55–cysteine 144 and cysteine 121–cysteine 136. An N-linked (GlcNAc...) asparagine glycan is attached at asparagine 137.

Tetramer of heterodimers of alpha and beta subunits (alphabeta)(4); disulfide-linked. In terms of tissue distribution, expressed by the venom gland.

Its subcellular location is the secreted. In terms of biological role, snaclec that induces human platelet aggregation in the absence of any cofactor with the EC(50) of 0.25 nM and causes tyrosine phosphorylation in human platelets. Antibodies against either platelet GPIbalpha (GP1BA) or GPVI (GP6) inhibit alboaggregin D-induced platelet aggregation. Only the combination of these two antibodies completely inhibit aggregation, suggesting that it acts through both GPIbalpha (GP1BA) and GPVI (GP6). The sequence is that of Snaclec alboaggregin-D subunit beta from Trimeresurus albolabris (White-lipped pit viper).